Consider the following 68-residue polypeptide: Large ribosomal subunit protein bL35 (68 aa).

2 stretches are compositionally biased toward basic residues: residues 1 to 15 and 23 to 38; these read MPKMKSHSGTKKRFK and TARKAGKRHLNEHKSS. The disordered stretch occupies residues 1–38; the sequence is MPKMKSHSGTKKRFKVTGSGKVTARKAGKRHLNEHKSS.

This sequence belongs to the bacterial ribosomal protein bL35 family.

This is Large ribosomal subunit protein bL35 from Cutibacterium acnes (strain DSM 16379 / KPA171202) (Propionibacterium acnes).